Reading from the N-terminus, the 203-residue chain is Ras-related protein RABD2a (203 aa).

GTP contacts are provided by residues 15–23 (GDSGVGKSC), 33–40 (YVESYIST), 63–67 (DTAGQ), 121–124 (NKSD), and 151–153 (SAK). The Effector region signature appears at 37 to 45 (YISTIGVDF). A disordered region spans residues 176-203 (QPAGNNARPPTVQIRGQPVAQKNGCCST). Residues Cys-200 and Cys-201 are each lipidated (S-geranylgeranyl cysteine).

Belongs to the small GTPase superfamily. Rab family. Does not interact with GC5.

It localises to the golgi apparatus. It is found in the trans-Golgi network membrane. Its subcellular location is the golgi apparatus membrane. In terms of biological role, protein transport. Regulator of membrane traffic from the Golgi apparatus towards the endoplasmic reticulum (ER). The protein is Ras-related protein RABD2a (RABD2A) of Arabidopsis thaliana (Mouse-ear cress).